Here is a 108-residue protein sequence, read N- to C-terminus: Large ribosomal subunit protein uL11 (108 aa).

This sequence belongs to the universal ribosomal protein uL11 family. As to quaternary structure, part of the ribosomal stalk of the 50S ribosomal subunit. Interacts with L10 and the large rRNA to form the base of the stalk. L10 forms an elongated spine to which L12 dimers bind in a sequential fashion forming a multimeric L10(L12)X complex.

In terms of biological role, forms part of the ribosomal stalk which helps the ribosome interact with GTP-bound translation factors. The chain is Large ribosomal subunit protein uL11 (rpl11) from Aeropyrum pernix (strain ATCC 700893 / DSM 11879 / JCM 9820 / NBRC 100138 / K1).